A 377-amino-acid polypeptide reads, in one-letter code: F-box protein At4g00755 (377 aa).

The region spanning 7–47 is the F-box domain; that stretch reads LDTDTSLSILSCLDDPSDIVRASAVSRSWRQFVVKYSLSKN.

This is F-box protein At4g00755 from Arabidopsis thaliana (Mouse-ear cress).